A 227-amino-acid polypeptide reads, in one-letter code: Ribosomal RNA large subunit methyltransferase E (227 aa).

S-adenosyl-L-methionine contacts are provided by G78, W80, D103, D119, and D143. Residue K183 is the Proton acceptor of the active site.

This sequence belongs to the class I-like SAM-binding methyltransferase superfamily. RNA methyltransferase RlmE family.

The protein resides in the cytoplasm. It carries out the reaction uridine(2552) in 23S rRNA + S-adenosyl-L-methionine = 2'-O-methyluridine(2552) in 23S rRNA + S-adenosyl-L-homocysteine + H(+). Specifically methylates the uridine in position 2552 of 23S rRNA at the 2'-O position of the ribose in the fully assembled 50S ribosomal subunit. This chain is Ribosomal RNA large subunit methyltransferase E, found in Rickettsia bellii (strain RML369-C).